Here is a 428-residue protein sequence, read N- to C-terminus: Cytochrome c biogenesis protein CcsB (428 aa).

Helical transmembrane passes span 14–34 (LRFAISLIIFIAIASGIGTFI), 72–92 (SFWFLFTLILLCISLAACSFR), and 162–182 (IGPLVVHIGLIVLLIGSAYGS).

It belongs to the Ccs1/CcsB family. In terms of assembly, may interact with CcsA.

It localises to the cellular thylakoid membrane. Required during biogenesis of c-type cytochromes (cytochrome c6 and cytochrome f) at the step of heme attachment. The polypeptide is Cytochrome c biogenesis protein CcsB (Prochlorococcus marinus (strain AS9601)).